The primary structure comprises 395 residues: Cyclin-A2 (395 aa).

A disordered region spans residues 1–93 (MLAEQENQEN…EEAADAPGLR (93 aa)). Low complexity predominate over residues 27–60 (ALGLLRGGPARPGPAAQAARNGEGRGAAAGQQQQ).

This sequence belongs to the cyclin family. Cyclin AB subfamily. Interacts with the CDK1 and CDK2 protein kinases to form serine/threonine kinase holoenzyme complexes.

It localises to the nucleus. Its subcellular location is the cytoplasm. Its function is as follows. Cyclin which controls both the G1/S and the G2/M transition phases of the cell cycle. Functions through the formation of specific serine/threonine kinase holoenzyme complexes with the cyclin-dependent protein kinases CDK1 and CDK2. The cyclin subunit confers the substrate specificity of these complexes and differentially interacts with and activates CDK1 and CDK2 throughout the cell cycle. This chain is Cyclin-A2, found in Gallus gallus (Chicken).